The chain runs to 168 residues: Pheromone-binding protein (168 aa).

Residues Met-1–Ser-26 form the signal peptide. 3 disulfide bridges follow: Cys-45-Cys-80, Cys-76-Cys-134, and Cys-123-Cys-143.

Belongs to the PBP/GOBP family. Homodimer. As to expression, antenna.

Functionally, this major soluble protein in olfactory sensilla of male moths might serve to solubilize the extremely hydrophobic pheromone molecules and to transport pheromone through the aqueous lymph to receptors located on olfactory cilia. PBP is also found in sensilla from female M.sexta antennae. This chain is Pheromone-binding protein, found in Manduca sexta (Tobacco hawkmoth).